The sequence spans 241 residues: Phosphoribosylaminoimidazole-succinocarboxamide synthase (241 aa).

It belongs to the SAICAR synthetase family.

It carries out the reaction 5-amino-1-(5-phospho-D-ribosyl)imidazole-4-carboxylate + L-aspartate + ATP = (2S)-2-[5-amino-1-(5-phospho-beta-D-ribosyl)imidazole-4-carboxamido]succinate + ADP + phosphate + 2 H(+). The protein operates within purine metabolism; IMP biosynthesis via de novo pathway; 5-amino-1-(5-phospho-D-ribosyl)imidazole-4-carboxamide from 5-amino-1-(5-phospho-D-ribosyl)imidazole-4-carboxylate: step 1/2. The sequence is that of Phosphoribosylaminoimidazole-succinocarboxamide synthase from Lacticaseibacillus paracasei (strain ATCC 334 / BCRC 17002 / CCUG 31169 / CIP 107868 / KCTC 3260 / NRRL B-441) (Lactobacillus paracasei).